Reading from the N-terminus, the 427-residue chain is Light-independent protochlorophyllide reductase subunit N (427 aa).

Residues Cys32, Cys57, and Cys118 each contribute to the [4Fe-4S] cluster site.

It belongs to the BchN/ChlN family. In terms of assembly, protochlorophyllide reductase is composed of three subunits; BchL, BchN and BchB. Forms a heterotetramer of two BchB and two BchN subunits. [4Fe-4S] cluster is required as a cofactor.

The catalysed reaction is chlorophyllide a + oxidized 2[4Fe-4S]-[ferredoxin] + 2 ADP + 2 phosphate = protochlorophyllide a + reduced 2[4Fe-4S]-[ferredoxin] + 2 ATP + 2 H2O. The protein operates within porphyrin-containing compound metabolism; bacteriochlorophyll biosynthesis (light-independent). Component of the dark-operative protochlorophyllide reductase (DPOR) that uses Mg-ATP and reduced ferredoxin to reduce ring D of protochlorophyllide (Pchlide) to form chlorophyllide a (Chlide). This reaction is light-independent. The NB-protein (BchN-BchB) is the catalytic component of the complex. In Rubrivivax gelatinosus (strain NBRC 100245 / IL144), this protein is Light-independent protochlorophyllide reductase subunit N.